The primary structure comprises 351 residues: DNA-directed RNA polymerase subunit alpha (351 aa).

The tract at residues 1 to 245 (MPRRNLLKGF…EHFTVFVNFD (245 aa)) is alpha N-terminal domain (alpha-NTD). Residues 261–351 (AVLELLNTKI…MRQKEEIDEA (91 aa)) form an alpha C-terminal domain (alpha-CTD) region.

This sequence belongs to the RNA polymerase alpha chain family. Homodimer. The RNAP catalytic core consists of 2 alpha, 1 beta, 1 beta' and 1 omega subunit. When a sigma factor is associated with the core the holoenzyme is formed, which can initiate transcription.

It carries out the reaction RNA(n) + a ribonucleoside 5'-triphosphate = RNA(n+1) + diphosphate. In terms of biological role, DNA-dependent RNA polymerase catalyzes the transcription of DNA into RNA using the four ribonucleoside triphosphates as substrates. This chain is DNA-directed RNA polymerase subunit alpha, found in Treponema pallidum (strain Nichols).